Here is a 439-residue protein sequence, read N- to C-terminus: Polygalacturonase QRT2 (439 aa).

Positions 1–21 (MYEKIIILSVFLLTFLPSCFS) are cleaved as a signal peptide. The interval 43 to 69 (RQHQHGHNTRNSHLKNRHGYAPRSSPR) is disordered. Over residues 44–62 (QHQHGHNTRNSHLKNRHGY) the composition is skewed to basic residues. 2 PbH1 repeats span residues 201-250 (CNNL…HVSG) and 251-272 (TQNI…SIVS). The active-site Proton donor is aspartate 265. Residue histidine 288 is part of the active site. PbH1 repeat units lie at residues 304-325 (VSNV…RIKT) and 333-354 (AKNI…IINQ).

The protein belongs to the glycosyl hydrolase 28 family. Expressed predominantly in roots with lower expression levels in rosette leaves, flower buds and siliques. Bearly detected in seeds. Found in flowers undergoing floral organ abscission. Also expressed early in anther development, at the time of microspore separation.

The protein localises to the secreted. The protein resides in the cell wall. The catalysed reaction is (1,4-alpha-D-galacturonosyl)n+m + H2O = (1,4-alpha-D-galacturonosyl)n + (1,4-alpha-D-galacturonosyl)m.. Polygalacturonase required for cell type-specific pectin degradation to separate microspores. Involved in anther dehiscence and floral organ abscission. In Arabidopsis thaliana (Mouse-ear cress), this protein is Polygalacturonase QRT2 (QRT2).